The sequence spans 236 residues: UPF0173 metal-dependent hydrolase Mnod_3315 (236 aa).

The protein belongs to the UPF0173 family.

This Methylobacterium nodulans (strain LMG 21967 / CNCM I-2342 / ORS 2060) protein is UPF0173 metal-dependent hydrolase Mnod_3315.